Reading from the N-terminus, the 311-residue chain is Regulator of rDNA transcription protein 6 (311 aa).

Transmembrane regions (helical) follow at residues Pro-32–Leu-52 and Tyr-271–Thr-291.

The protein resides in the membrane. Its function is as follows. May be involved in the modulation of rDNA transcription. The sequence is that of Regulator of rDNA transcription protein 6 (RRT6) from Saccharomyces cerevisiae (strain ATCC 204508 / S288c) (Baker's yeast).